The following is a 71-amino-acid chain: UPF0352 protein VCM66_1964 (71 aa).

It belongs to the UPF0352 family.

The chain is UPF0352 protein VCM66_1964 from Vibrio cholerae serotype O1 (strain M66-2).